A 266-amino-acid polypeptide reads, in one-letter code: 15-hydroxyprostaglandin dehydrogenase [NAD(+)] (266 aa).

NAD(+)-binding positions include 12–20 (GAAQGIGRA), 36–37 (DW), 63–65 (CDV), and N91. S138 and Q148 together coordinate substrate. Catalysis depends on Y151, which acts as the Proton acceptor. NAD(+) contacts are provided by residues 151–155 (YCASK) and 186–188 (VDT).

The protein belongs to the short-chain dehydrogenases/reductases (SDR) family. As to quaternary structure, homodimer.

The protein resides in the cytoplasm. The enzyme catalyses prostaglandin E2 + NAD(+) = 15-oxoprostaglandin E2 + NADH + H(+). It catalyses the reaction (15S)-hydroxy-(5Z,8Z,11Z,13E)-eicosatetraenoate + NAD(+) = 15-oxo-(5Z,8Z,11Z,13E)-eicosatetraenoate + NADH + H(+). It carries out the reaction (11R)-hydroxy-(5Z,8Z,12E,14Z)-eicosatetraenoate + NAD(+) = 11-oxo-(5Z,8Z,12E,14Z)-eicosatetraenoate + NADH + H(+). The catalysed reaction is lipoxin A4 + NAD(+) = 15-oxo-(5S,6R)-dihydroxy-(7E,9E,11Z,13E)-eicosatetraenoate + NADH + H(+). The enzyme catalyses 15-oxo-(5S,6R)-dihydroxy-(7E,9E,11Z)-eicosatrienoate + NADH + H(+) = (5S,6R,15S)-trihydroxy-(7E,9E,11Z)-eicosatrienoate + NAD(+). It catalyses the reaction prostaglandin A1 + NAD(+) = 15-oxo-prostaglandin A1 + NADH + H(+). It carries out the reaction prostaglandin E1 + NAD(+) = 15-oxoprostaglandin E1 + NADH + H(+). The catalysed reaction is 14-hydroxy-(4Z,7Z,10Z,12E,16Z,19Z)-docosahexaenoate + NAD(+) = 14-oxo-(4Z,7Z,10Z,12E,16Z,19Z)-docosahexaenoate + NADH + H(+). The enzyme catalyses resolvin E1 + NAD(+) = 18-oxo-resolvin E1 + NADH + H(+). It catalyses the reaction resolvin D1 + NAD(+) = 8-oxoresolvin D1 + NADH + H(+). It carries out the reaction resolvin D1 + NAD(+) = 17-oxoresolvin D1 + NADH + H(+). The catalysed reaction is resolvin D2 + NAD(+) = 7-oxoresolvin D2 + NADH + H(+). The enzyme catalyses resolvin D2 + NAD(+) = 16-oxoresolvin D2 + NADH + H(+). Catalyzes the NAD-dependent dehydrogenation (oxidation) of a broad array of hydroxylated polyunsaturated fatty acids (mainly eicosanoids and docosanoids, including prostaglandins, lipoxins and resolvins), yielding their corresponding keto (oxo) metabolites. Decreases the levels of the pro-proliferative prostaglandins such as prostaglandin E2 (whose activity is increased in cancer because of an increase in the expression of cyclooxygenase 2) and generates oxo-fatty acid products that can profoundly influence cell function by abrogating pro-inflammatory cytokine expression. Converts resolvins E1, D1 and D2 to their oxo products, which represents a mode of resolvin inactivation. Resolvin E1 plays important roles during the resolution phase of acute inflammation, while resolvins D1 and D2 have a unique role in obesity-induced adipose inflammation. The sequence is that of 15-hydroxyprostaglandin dehydrogenase [NAD(+)] (HPGD) from Bos taurus (Bovine).